A 154-amino-acid polypeptide reads, in one-letter code: Methylglyoxal synthase (154 aa).

One can recognise an MGS-like domain in the interval 1–154; the sequence is MELTTRTIAA…RYMQQRLDLK (154 aa). Residues His19, Lys23, 45 to 48, and 65 to 66 contribute to the substrate site; these read TGTT and SG. Asp71 functions as the Proton donor/acceptor in the catalytic mechanism. His98 is a binding site for substrate.

The protein belongs to the methylglyoxal synthase family.

It catalyses the reaction dihydroxyacetone phosphate = methylglyoxal + phosphate. Catalyzes the formation of methylglyoxal from dihydroxyacetone phosphate. The polypeptide is Methylglyoxal synthase (Yersinia pseudotuberculosis serotype O:1b (strain IP 31758)).